The sequence spans 490 residues: UDP-N-acetylmuramoyl-L-alanyl-D-glutamate--2,6-diaminopimelate ligase (490 aa).

Residues L22, S24, and 39–41 contribute to the UDP-N-acetyl-alpha-D-muramoyl-L-alanyl-D-glutamate site; that span reads HQT. 111 to 117 provides a ligand contact to ATP; that stretch reads GTNGKTT. Residues N152, 153–154, S180, Q186, and R188 each bind UDP-N-acetyl-alpha-D-muramoyl-L-alanyl-D-glutamate; that span reads TT. K220 carries the N6-carboxylysine modification. Meso-2,6-diaminopimelate contacts are provided by residues R385, 409–412, G460, and E464; that span reads DNPR. The Meso-diaminopimelate recognition motif signature appears at 409–412; the sequence is DNPR.

It belongs to the MurCDEF family. MurE subfamily. Mg(2+) is required as a cofactor. In terms of processing, carboxylation is probably crucial for Mg(2+) binding and, consequently, for the gamma-phosphate positioning of ATP.

It is found in the cytoplasm. It catalyses the reaction UDP-N-acetyl-alpha-D-muramoyl-L-alanyl-D-glutamate + meso-2,6-diaminopimelate + ATP = UDP-N-acetyl-alpha-D-muramoyl-L-alanyl-gamma-D-glutamyl-meso-2,6-diaminopimelate + ADP + phosphate + H(+). Its pathway is cell wall biogenesis; peptidoglycan biosynthesis. Catalyzes the addition of meso-diaminopimelic acid to the nucleotide precursor UDP-N-acetylmuramoyl-L-alanyl-D-glutamate (UMAG) in the biosynthesis of bacterial cell-wall peptidoglycan. This is UDP-N-acetylmuramoyl-L-alanyl-D-glutamate--2,6-diaminopimelate ligase from Yersinia pestis.